We begin with the raw amino-acid sequence, 497 residues long: Probable malate:quinone oxidoreductase (497 aa).

The protein belongs to the MQO family. It depends on FAD as a cofactor.

The catalysed reaction is (S)-malate + a quinone = a quinol + oxaloacetate. Its pathway is carbohydrate metabolism; tricarboxylic acid cycle; oxaloacetate from (S)-malate (quinone route): step 1/1. The chain is Probable malate:quinone oxidoreductase from Hahella chejuensis (strain KCTC 2396).